The chain runs to 167 residues: UPF0587 protein F46B6.12 (167 aa).

Residues cysteine 34, cysteine 37, cysteine 68, and cysteine 71 each coordinate Zn(2+).

The protein belongs to the UPF0587 family.

The sequence is that of UPF0587 protein F46B6.12 from Caenorhabditis elegans.